The primary structure comprises 266 residues: MAIHLYKTSTPSTRNGTVDSQVKSNPRNNLIYGQHHCGKGRNARGIITARHRGGGHKRLYRKIDFRRNEKDIYGRIVTIEYDPNRNAYICLIHYGDGEKRYILHPRGAIIGDTIVSGTEVPIKMGNALPLTDMPLGTAIHNIEITLGKGGQLARAAGAVAKLIAKEGKSATLKLPSGEVRSISKNCSATVGQVGNVGVNQKSLGRAGSKRWLGKRPVVRGVVMNPVDHPMGVVKGEPQLVEKNPQPLGVILHLEEEVEKGINIVII.

The tract at residues 1-24 is disordered; it reads MAIHLYKTSTPSTRNGTVDSQVKS. Polar residues predominate over residues 7 to 24; the sequence is KTSTPSTRNGTVDSQVKS.

Belongs to the universal ribosomal protein uL2 family. In terms of assembly, part of the 50S ribosomal subunit.

The protein localises to the plastid. It localises to the chloroplast. This chain is Large ribosomal subunit protein uL2c (rpl2), found in Nicotiana debneyi (Debney's tobacco).